Consider the following 107-residue polypeptide: uncharacterized protein (107 aa).

The helical transmembrane segment at 62 to 79 (LLVVIVYYFSHVGSFSLA) threads the bilayer.

Its subcellular location is the nucleus membrane. This is an uncharacterized protein from Schizosaccharomyces pombe (strain 972 / ATCC 24843) (Fission yeast).